Here is a 136-residue protein sequence, read N- to C-terminus: Small ribosomal subunit protein uS11 (136 aa).

Disordered stretches follow at residues 1 to 20 and 115 to 136; these read MAQR…NVTN and VTPQ…EKAR. Positions 125-136 are enriched in basic residues; sequence PPKRVLKREKAR.

The protein belongs to the universal ribosomal protein uS11 family. In terms of assembly, part of the 30S ribosomal subunit. Interacts with proteins S7 and S18. Binds to IF-3.

Its function is as follows. Located on the platform of the 30S subunit, it bridges several disparate RNA helices of the 16S rRNA. Forms part of the Shine-Dalgarno cleft in the 70S ribosome. The protein is Small ribosomal subunit protein uS11 of Mycoplasmopsis pulmonis (strain UAB CTIP) (Mycoplasma pulmonis).